Consider the following 390-residue polypeptide: 23S rRNA (uracil(747)-C(5))-methyltransferase RlmC (390 aa).

[4Fe-4S] cluster contacts are provided by C12, C20, C23, and C100. 4 residues coordinate S-adenosyl-L-methionine: Q225, F254, E275, and N322. The active-site Nucleophile is the C349.

Belongs to the class I-like SAM-binding methyltransferase superfamily. RNA M5U methyltransferase family. RlmC subfamily.

It catalyses the reaction uridine(747) in 23S rRNA + S-adenosyl-L-methionine = 5-methyluridine(747) in 23S rRNA + S-adenosyl-L-homocysteine + H(+). In terms of biological role, catalyzes the formation of 5-methyl-uridine at position 747 (m5U747) in 23S rRNA. This Shewanella baltica (strain OS185) protein is 23S rRNA (uracil(747)-C(5))-methyltransferase RlmC.